Here is a 325-residue protein sequence, read N- to C-terminus: tRNA N(3)-methylcytidine methyltransferase Mettl2 (325 aa).

The S-adenosyl-L-methionine site is built by tryptophan 96 and tyrosine 100. Residues tyrosine 100, histidine 112, glutamate 138, glycine 140, aspartate 165, aspartate 191, and isoleucine 212 each contribute to the S-adenosyl-L-homocysteine site. Residues glycine 140, aspartate 165, aspartate 191, and isoleucine 212 each contribute to the S-adenosyl-L-methionine site.

Belongs to the methyltransferase superfamily. METL family. Interacts with Psn. In terms of tissue distribution, widely expressed. Expressed in ovaries, head, thorax and abdomen of adult flies, and in the CNS of third instar larvae. Isoform 2 is predominantly expressed in larvae and in adult tissues that have been tested.

In terms of biological role, probable methyltransferase. This chain is tRNA N(3)-methylcytidine methyltransferase Mettl2, found in Drosophila melanogaster (Fruit fly).